Here is a 421-residue protein sequence, read N- to C-terminus: Mitochondrial distribution and morphology protein 10 (421 aa).

It belongs to the MDM10 family. As to quaternary structure, component of the ER-mitochondria encounter structure (ERMES) or MDM complex, composed of MMM1, MDM10, MDM12 and MDM34. Associates with the mitochondrial outer membrane sorting assembly machinery SAM(core) complex.

It localises to the mitochondrion outer membrane. Component of the ERMES/MDM complex, which serves as a molecular tether to connect the endoplasmic reticulum and mitochondria. Components of this complex are involved in the control of mitochondrial shape and protein biogenesis and may function in phospholipid exchange. MDM10 is involved in the late assembly steps of the general translocase of the mitochondrial outer membrane (TOM complex). Functions in the TOM40-specific route of the assembly of outer membrane beta-barrel proteins, including the association of TOM40 with the receptor TOM22 and small TOM proteins. Can associate with the SAM(core) complex as well as the MDM12-MMM1 complex, both involved in late steps of the major beta-barrel assembly pathway, that is responsible for biogenesis of all outer membrane beta-barrel proteins. May act as a switch that shuttles between both complexes and channels precursor proteins into the TOM40-specific pathway. Plays a role in mitochondrial morphology and in the inheritance of mitochondria. The polypeptide is Mitochondrial distribution and morphology protein 10 (Vanderwaltozyma polyspora (strain ATCC 22028 / DSM 70294 / BCRC 21397 / CBS 2163 / NBRC 10782 / NRRL Y-8283 / UCD 57-17) (Kluyveromyces polysporus)).